The primary structure comprises 274 residues: Large ribosomal subunit protein uL2cz/uL2cy (274 aa).

Disordered regions lie at residues 1–22 (MAINLYKTSTPSTRNGTVDSQV) and 224–274 (NPVD…RRSK).

Belongs to the universal ribosomal protein uL2 family. Part of the 50S ribosomal subunit.

It is found in the plastid. Its subcellular location is the chloroplast. This Helianthus annuus (Common sunflower) protein is Large ribosomal subunit protein uL2cz/uL2cy (rpl2-A).